Here is a 230-residue protein sequence, read N- to C-terminus: Cytochrome c oxidase subunit 2 (230 aa).

The Mitochondrial intermembrane segment spans residues 1–14 (MAHPSQLGFQDAAS). A helical membrane pass occupies residues 15 to 45 (PVMEELLHFHDHALMIVFLISTLVLYIIAAT). Topologically, residues 46 to 59 (ASTKLTDKYILDSQ) are mitochondrial matrix. Residues 60–87 (EIEVIWTIMPAVILILIALPSLRILYLM) form a helical membrane-spanning segment. Residues 88-230 (DEINDPHLTV…NWSSLMLEDA (143 aa)) are Mitochondrial intermembrane-facing. The Cu cation site is built by H161, C196, E198, C200, H204, and M207. Mg(2+) is bound at residue E198.

It belongs to the cytochrome c oxidase subunit 2 family. As to quaternary structure, component of the cytochrome c oxidase (complex IV, CIV), a multisubunit enzyme composed of 14 subunits. The complex is composed of a catalytic core of 3 subunits MT-CO1, MT-CO2 and MT-CO3, encoded in the mitochondrial DNA, and 11 supernumerary subunits COX4I, COX5A, COX5B, COX6A, COX6B, COX6C, COX7A, COX7B, COX7C, COX8 and NDUFA4, which are encoded in the nuclear genome. The complex exists as a monomer or a dimer and forms supercomplexes (SCs) in the inner mitochondrial membrane with NADH-ubiquinone oxidoreductase (complex I, CI) and ubiquinol-cytochrome c oxidoreductase (cytochrome b-c1 complex, complex III, CIII), resulting in different assemblies (supercomplex SCI(1)III(2)IV(1) and megacomplex MCI(2)III(2)IV(2)). Found in a complex with TMEM177, COA6, COX18, COX20, SCO1 and SCO2. Interacts with TMEM177 in a COX20-dependent manner. Interacts with COX20. Interacts with COX16. The cofactor is Cu cation.

It localises to the mitochondrion inner membrane. The enzyme catalyses 4 Fe(II)-[cytochrome c] + O2 + 8 H(+)(in) = 4 Fe(III)-[cytochrome c] + 2 H2O + 4 H(+)(out). Its function is as follows. Component of the cytochrome c oxidase, the last enzyme in the mitochondrial electron transport chain which drives oxidative phosphorylation. The respiratory chain contains 3 multisubunit complexes succinate dehydrogenase (complex II, CII), ubiquinol-cytochrome c oxidoreductase (cytochrome b-c1 complex, complex III, CIII) and cytochrome c oxidase (complex IV, CIV), that cooperate to transfer electrons derived from NADH and succinate to molecular oxygen, creating an electrochemical gradient over the inner membrane that drives transmembrane transport and the ATP synthase. Cytochrome c oxidase is the component of the respiratory chain that catalyzes the reduction of oxygen to water. Electrons originating from reduced cytochrome c in the intermembrane space (IMS) are transferred via the dinuclear copper A center (CU(A)) of subunit 2 and heme A of subunit 1 to the active site in subunit 1, a binuclear center (BNC) formed by heme A3 and copper B (CU(B)). The BNC reduces molecular oxygen to 2 water molecules using 4 electrons from cytochrome c in the IMS and 4 protons from the mitochondrial matrix. This is Cytochrome c oxidase subunit 2 (mt-co2) from Tetraodon nigroviridis (Spotted green pufferfish).